A 612-amino-acid polypeptide reads, in one-letter code: Probable Xaa-Pro aminopeptidase P (612 aa).

Mn(2+) is bound by residues D409, D420, E518, and E532.

Belongs to the peptidase M24B family. It depends on Mn(2+) as a cofactor.

It carries out the reaction Release of any N-terminal amino acid, including proline, that is linked to proline, even from a dipeptide or tripeptide.. Functionally, catalyzes the removal of a penultimate prolyl residue from the N-termini of peptides. The protein is Probable Xaa-Pro aminopeptidase P (AMPP) of Verticillium alfalfae (strain VaMs.102 / ATCC MYA-4576 / FGSC 10136) (Verticillium wilt of alfalfa).